A 121-amino-acid polypeptide reads, in one-letter code: Chromosome transmission fidelity protein 8 homolog (121 aa).

The protein belongs to the CTF8 family. In terms of assembly, component of the CTF18-RFC complex, which consists of CTF18, CTF8, DSCC1, RFC2, RFC3, RFC4 and RFC5. The CTF18-RFC complex does not interact with the Rad9/Rad1/Hus1 complex. The CTF18-RFC complex interacts with POLH. CTF18/CTF8/DSCC1 associate with PCNA. CTF8 exists as a dimer with DSCC1.

The protein resides in the nucleus. Functionally, chromosome cohesion factor involved in sister chromatid cohesion and fidelity of chromosome transmission. Component of one of the cell nuclear antigen loader complexes, CTF18-replication factor C (CTF18-RFC), which consists of CTF18, CTF8, DSCC1, RFC2, RFC3, RFC4 and RFC5. The CTF18-RFC complex binds to single-stranded and primed DNAs and has weak ATPase activity that is stimulated the presence of primed DNA, replication protein A (RPA) and proliferating cell nuclear antigen (PCNA). The CTF18-RFC complex catalyzes the ATP-dependent loading of PCNA onto primed and gapped DNA. It also interacts with and stimulates POLH, which is suggestive of a protein network that coordinates DNA repair, recombination and chromosome cohesion reactions with replication fork progression. The protein is Chromosome transmission fidelity protein 8 homolog of Rattus norvegicus (Rat).